Here is a 241-residue protein sequence, read N- to C-terminus: Demethylmenaquinone methyltransferase (241 aa).

S-adenosyl-L-methionine contacts are provided by residues Thr68, Asp88, and 114 to 115; that span reads DA.

It belongs to the class I-like SAM-binding methyltransferase superfamily. MenG/UbiE family.

The enzyme catalyses a 2-demethylmenaquinol + S-adenosyl-L-methionine = a menaquinol + S-adenosyl-L-homocysteine + H(+). It participates in quinol/quinone metabolism; menaquinone biosynthesis; menaquinol from 1,4-dihydroxy-2-naphthoate: step 2/2. Its function is as follows. Methyltransferase required for the conversion of demethylmenaquinol (DMKH2) to menaquinol (MKH2). The protein is Demethylmenaquinone methyltransferase of Deinococcus radiodurans (strain ATCC 13939 / DSM 20539 / JCM 16871 / CCUG 27074 / LMG 4051 / NBRC 15346 / NCIMB 9279 / VKM B-1422 / R1).